Here is a 147-residue protein sequence, read N- to C-terminus: Hemoglobin subunit epsilon (147 aa).

One can recognise a Globin domain in the interval 3-147 (HFTAEEKAAI…VAIALGHKYH (145 aa)). A phosphoserine mark is found at serine 14 and serine 51. Heme b is bound by residues histidine 64 and histidine 93.

It belongs to the globin family. In terms of assembly, heterotetramer of two alpha chains and two epsilon chains in early embryonic hemoglobin Gower-2; two zeta chains and two epsilon chains in early embryonic hemoglobin Gower-1. In terms of tissue distribution, red blood cells.

In terms of biological role, the epsilon chain is a beta-type chain of early mammalian embryonic hemoglobin. This is Hemoglobin subunit epsilon (HBE1) from Pithecia irrorata (Gray monk saki).